Here is a 447-residue protein sequence, read N- to C-terminus: tRNA-2-methylthio-N(6)-dimethylallyladenosine synthase (447 aa).

One can recognise an MTTase N-terminal domain in the interval 1-116 (MYIRTFGCQM…LPDLIKRRRA (116 aa)). Cys8, Cys45, Cys79, Cys153, Cys157, and Cys160 together coordinate [4Fe-4S] cluster. Residues 139–372 (RVDGATAFVS…QALINQQAAA (234 aa)) form the Radical SAM core domain. One can recognise a TRAM domain in the interval 375–438 (QGMIGTRQRV…TNSLRGRVAG (64 aa)).

The protein belongs to the methylthiotransferase family. MiaB subfamily. As to quaternary structure, monomer. Requires [4Fe-4S] cluster as cofactor.

It is found in the cytoplasm. The enzyme catalyses N(6)-dimethylallyladenosine(37) in tRNA + (sulfur carrier)-SH + AH2 + 2 S-adenosyl-L-methionine = 2-methylsulfanyl-N(6)-dimethylallyladenosine(37) in tRNA + (sulfur carrier)-H + 5'-deoxyadenosine + L-methionine + A + S-adenosyl-L-homocysteine + 2 H(+). In terms of biological role, catalyzes the methylthiolation of N6-(dimethylallyl)adenosine (i(6)A), leading to the formation of 2-methylthio-N6-(dimethylallyl)adenosine (ms(2)i(6)A) at position 37 in tRNAs that read codons beginning with uridine. This is tRNA-2-methylthio-N(6)-dimethylallyladenosine synthase from Bordetella pertussis (strain Tohama I / ATCC BAA-589 / NCTC 13251).